Reading from the N-terminus, the 63-residue chain is 2-hydroxymuconate tautomerase (63 aa).

Catalysis depends on Pro-2, which acts as the Proton acceptor; via imino nitrogen.

The protein belongs to the 4-oxalocrotonate tautomerase family. In terms of assembly, homohexamer.

It catalyses the reaction (2Z,4E)-2-hydroxyhexa-2,4-dienedioate = (3E)-2-oxohex-3-enedioate. It functions in the pathway xenobiotic degradation; toluene degradation. Catalyzes the ketonization of 2-hydroxymuconate stereoselectively to yield 2-oxo-3-hexenedioate. The protein is 2-hydroxymuconate tautomerase (dmpI) of Pseudomonas sp. (strain CF600).